Consider the following 896-residue polypeptide: Translation initiation factor IF-2 (896 aa).

The disordered stretch occupies residues 32 to 306 (LAQAGSSDTK…HKTKKQSEEH (275 aa)). Polar residues-rich tracts occupy residues 35–48 (AGSSDTKNSPVSKA) and 114–126 (ADSTEPLSNSSQE). Over residues 156–170 (ARNEETPIIRTRTEP) the composition is skewed to basic and acidic residues. Over residues 213-237 (QQTRPSVETASTKQQQPSGTNTRPA) the composition is skewed to polar residues. The span at 256–280 (RGPDRDRTKRSDENVKAFTGRDRYG) shows a compositional bias: basic and acidic residues. Residues 401–570 (IRSPIVAFMG…ALQAEVLELK (170 aa)) form the tr-type G domain. Positions 410-417 (GHVDHGKT) are G1. 410-417 (GHVDHGKT) is a GTP binding site. The segment at 435–439 (AITQH) is G2. The tract at residues 456–459 (DTPG) is G3. Residues 456 to 460 (DTPGH) and 510 to 513 (NKCD) each bind GTP. The tract at residues 510-513 (NKCD) is G4. The interval 546 to 548 (SAK) is G5.

It belongs to the TRAFAC class translation factor GTPase superfamily. Classic translation factor GTPase family. IF-2 subfamily.

The protein resides in the cytoplasm. One of the essential components for the initiation of protein synthesis. Protects formylmethionyl-tRNA from spontaneous hydrolysis and promotes its binding to the 30S ribosomal subunits. Also involved in the hydrolysis of GTP during the formation of the 70S ribosomal complex. The polypeptide is Translation initiation factor IF-2 (infB) (Chlamydia muridarum (strain MoPn / Nigg)).